The sequence spans 195 residues: Molybdenum cofactor guanylyltransferase (195 aa).

Residues 10–12, lysine 23, asparagine 51, aspartate 69, and aspartate 99 each bind GTP; that span reads LAG. Residue aspartate 99 participates in Mg(2+) binding.

It belongs to the MobA family. In terms of assembly, monomer. The cofactor is Mg(2+).

The protein localises to the cytoplasm. It catalyses the reaction Mo-molybdopterin + GTP + H(+) = Mo-molybdopterin guanine dinucleotide + diphosphate. Transfers a GMP moiety from GTP to Mo-molybdopterin (Mo-MPT) cofactor (Moco or molybdenum cofactor) to form Mo-molybdopterin guanine dinucleotide (Mo-MGD) cofactor. This chain is Molybdenum cofactor guanylyltransferase, found in Histophilus somni (strain 129Pt) (Haemophilus somnus).